Reading from the N-terminus, the 158-residue chain is Transcription elongation factor GreA (158 aa).

This sequence belongs to the GreA/GreB family.

In terms of biological role, necessary for efficient RNA polymerase transcription elongation past template-encoded arresting sites. The arresting sites in DNA have the property of trapping a certain fraction of elongating RNA polymerases that pass through, resulting in locked ternary complexes. Cleavage of the nascent transcript by cleavage factors such as GreA or GreB allows the resumption of elongation from the new 3'terminus. GreA releases sequences of 2 to 3 nucleotides. This is Transcription elongation factor GreA from Rhizobium leguminosarum bv. trifolii (strain WSM2304).